A 328-amino-acid chain; its full sequence is Malate dehydrogenase 1 (328 aa).

12 to 18 (GAAGQIG) is an NAD(+) binding site. Substrate is bound by residues R95 and R101. NAD(+) is bound by residues N108, Q115, and 132–134 (VGN). Substrate contacts are provided by N134 and R165. Residue H190 is the Proton acceptor of the active site.

The protein belongs to the LDH/MDH superfamily. MDH type 2 family.

The catalysed reaction is (S)-malate + NAD(+) = oxaloacetate + NADH + H(+). Functionally, catalyzes the reversible oxidation of malate to oxaloacetate. The sequence is that of Malate dehydrogenase 1 from Albidiferax ferrireducens (strain ATCC BAA-621 / DSM 15236 / T118) (Rhodoferax ferrireducens).